We begin with the raw amino-acid sequence, 118 residues long: Non-specific lipid-transfer protein 2A (118 aa).

A signal peptide spans 1-26 (MARAQLVLVALVAAALLLAGPHTTMA). 4 cysteine pairs are disulfide-bonded: cysteine 30-cysteine 77, cysteine 40-cysteine 54, cysteine 55-cysteine 100, and cysteine 75-cysteine 114.

It belongs to the plant LTP family.

Its function is as follows. Plant non-specific lipid-transfer proteins transfer phospholipids as well as galactolipids across membranes. May play a role in wax or cutin deposition in the cell walls of expanding epidermal cells and certain secretory tissues. The sequence is that of Non-specific lipid-transfer protein 2A (LTP2-A) from Oryza sativa subsp. japonica (Rice).